A 67-amino-acid polypeptide reads, in one-letter code: Large ribosomal subunit protein bL35 (67 aa).

The protein belongs to the bacterial ribosomal protein bL35 family.

The sequence is that of Large ribosomal subunit protein bL35 from Mesorhizobium japonicum (strain LMG 29417 / CECT 9101 / MAFF 303099) (Mesorhizobium loti (strain MAFF 303099)).